The chain runs to 232 residues: uncharacterized protein (232 aa).

Transmembrane regions (helical) follow at residues 4 to 24 (LLGVFFVPIIPFSFVVDYVFE), 42 to 62 (VLVGALGVGKAGTLLILLAVL), 100 to 120 (LFFISAFAIPLTVIHFLILHM), 145 to 165 (LAFVALVSSLVIAPAYAFFTL), and 171 to 191 (GNLILTPILLIEWLVWLWVGF).

It localises to the cell membrane. This is an uncharacterized protein from Aquifex aeolicus (strain VF5).